Consider the following 585-residue polypeptide: Chaperonin GroEL, chloroplastic (585 aa).

ATP contacts are provided by residues 55-58 (TLGP), 113-117 (DGTTT), G442, 507-509 (NAA), and D523.

This sequence belongs to the chaperonin (HSP60) family. In terms of assembly, forms a cylinder of 14 subunits composed of two heptameric rings stacked back-to-back. Interacts with the co-chaperonin GroES.

It localises to the plastid. Its subcellular location is the chloroplast. The catalysed reaction is ATP + H2O + a folded polypeptide = ADP + phosphate + an unfolded polypeptide.. In terms of biological role, together with its co-chaperonin GroES, plays an essential role in assisting protein folding. The GroEL-GroES system forms a nano-cage that allows encapsulation of the non-native substrate proteins and provides a physical environment optimized to promote and accelerate protein folding. This Pyrenomonas salina protein is Chaperonin GroEL, chloroplastic.